An 87-amino-acid chain; its full sequence is Exodeoxyribonuclease 7 small subunit (87 aa).

The protein belongs to the XseB family. Heterooligomer composed of large and small subunits.

Its subcellular location is the cytoplasm. It catalyses the reaction Exonucleolytic cleavage in either 5'- to 3'- or 3'- to 5'-direction to yield nucleoside 5'-phosphates.. Functionally, bidirectionally degrades single-stranded DNA into large acid-insoluble oligonucleotides, which are then degraded further into small acid-soluble oligonucleotides. The protein is Exodeoxyribonuclease 7 small subunit of Serratia proteamaculans (strain 568).